A 930-amino-acid chain; its full sequence is MEGEGAPSWRGGPGGLIRELCRSFGHYNRHLARLQHNLRETKKFFRDVKYSQGNLFASGAAIGEGSPSGAGGGGTRDGGQNFISFPRHEEEHLQQTVSWHPCLLILGQNCNAKCQLLNILLGEKLLPTTKISSEENCKRRRIRFTHGTQTRVSLALPEQYELVHMMAAHRGHWDTIPEEDLEIRGDSEDPAHRIAELEVVLPYSLLKEVDVVVAPCRGFQSAEATLEEYMNQVLLIVIFAISEAELSSSDENELREIKEKFSLPIFFFKVPESGVELISPKKTDNEKSSLYCQLMDLEYLSTNHCSCGAPSPDAVAQSMLVEQLEKLRLLSTFSRQVLQKHLVEAATSLNEVHCRCLNIFINQAFDMQRDLQITPKRLEYTRRKENELYESLMNIANRKQEEMKDMIIETLSNMKEELLEDAANMEFKDIIIPENGEPVSSKDIKCCIKQIQELIISRLNQAVANKLISSVDYLRESFVGTLERCLKSLEESWEVSVHPARSLEKSKDVSVHITSNYLKQILNAAYHVEVTFHSGSTVTRMLWEQIKQIIQRITWVSPPAITSDWKRKVAQDAIESLSASKLAKSICSQFRTRLNSSHEAFAASLRQLEDGHSGRLEKTEDLWLKVRKDHAPRLARLSLESRSLQDVLLHGKPKLGRELGRGQYGVVYLCDSWGGHFPCALKSVVPPDEKHWNDLALEFHYMRSLQSHERLVDLHGSVIDYGYGGGSSIAVLLIMERLHRDLYTGLKAGLELETRLQIALDVVEGIRYLHSQGLVHRDIKLKNVLLDKKNRAKITDLGFCKPEAMMSGSIVGTPIHMAPELFTGKYDNSVDVYAFGILFWYICSGHVKLPEAFERCASKDHLWNNVRRGVRPERLPVFDEECWQLMEACWDGDSSQRPLLGIVQPMLQGIMDRLCKSSSEHPNKGLDDST.

Residues 383–428 are a coiled coil; it reads RKENELYESLMNIANRKQEEMKDMIIETLSNMKEELLEDAANMEFK. In terms of domain architecture, Protein kinase spans 653–907; it reads PKLGRELGRG…PLLGIVQPML (255 aa). ATP-binding positions include 659 to 667 and Lys682; that span reads LGRGQYGVV. Residue Asp778 is the Proton acceptor of the active site.

Belongs to the protein kinase superfamily. Ser/Thr protein kinase family. As to expression, widely expressed with the highest expression in brain and ovary.

Its subcellular location is the cytoplasm. It is found in the cell membrane. The protein localises to the apical cell membrane. The protein resides in the basolateral cell membrane. It localises to the cell junction. The catalysed reaction is L-seryl-[protein] + ATP = O-phospho-L-seryl-[protein] + ADP + H(+). It carries out the reaction L-threonyl-[protein] + ATP = O-phospho-L-threonyl-[protein] + ADP + H(+). It catalyses the reaction L-tyrosyl-[protein] + ATP = O-phospho-L-tyrosyl-[protein] + ADP + H(+). Its function is as follows. May act as a positive regulator of ERK phosphorylation downstream of fibroblast growth factor-receptor activation. May induce both caspase-dependent apoptosis and caspase-independent cell death. The polypeptide is Dual serine/threonine and tyrosine protein kinase (DSTYK) (Gallus gallus (Chicken)).